A 1693-amino-acid polypeptide reads, in one-letter code: uncharacterized protein (1693 aa).

16 WD repeats span residues 1008 to 1042 (HHEG…YLWS), 1053 to 1083 (GHQE…KLWQ), 1094 to 1124 (GHED…RIWN), 1135 to 1165 (GHAD…RLWD), 1176 to 1206 (GHTS…RLWD), 1217 to 1247 (GHQN…RVWS), 1258 to 1288 (GHDH…RLWT), 1299 to 1329 (GHQK…RQWD), 1340 to 1370 (GHSH…RLWT), 1381 to 1411 (DHQG…QLWN), 1422 to 1452 (GHQD…RVWN), 1463 to 1493 (HYEK…GIWE), 1504 to 1534 (GHEG…RIWD), 1545 to 1575 (GHQS…RLWD), 1586 to 1616 (GHQG…RLWD), and 1627 to 1657 (GHGN…KLWP).

This is an uncharacterized protein from Synechocystis sp. (strain ATCC 27184 / PCC 6803 / Kazusa).